We begin with the raw amino-acid sequence, 315 residues long: Methionyl-tRNA formyltransferase (315 aa).

113-116 lines the (6S)-5,6,7,8-tetrahydrofolate pocket; it reads SLLP.

Belongs to the Fmt family.

It catalyses the reaction L-methionyl-tRNA(fMet) + (6R)-10-formyltetrahydrofolate = N-formyl-L-methionyl-tRNA(fMet) + (6S)-5,6,7,8-tetrahydrofolate + H(+). Attaches a formyl group to the free amino group of methionyl-tRNA(fMet). The formyl group appears to play a dual role in the initiator identity of N-formylmethionyl-tRNA by promoting its recognition by IF2 and preventing the misappropriation of this tRNA by the elongation apparatus. This Cronobacter sakazakii (strain ATCC BAA-894) (Enterobacter sakazakii) protein is Methionyl-tRNA formyltransferase.